We begin with the raw amino-acid sequence, 409 residues long: Elongation factor Tu (409 aa).

One can recognise a tr-type G domain in the interval 10–214 (KPHVNIGTIG…EVDAYIPEPE (205 aa)). The tract at residues 19 to 26 (GHVDHGKT) is G1. A GTP-binding site is contributed by 19-26 (GHVDHGKT). Thr26 is a Mg(2+) binding site. The segment at 60–64 (GITIN) is G2. Residues 81-84 (DCPG) are G3. GTP is bound by residues 81 to 85 (DCPGH) and 136 to 139 (NKQD). The interval 136-139 (NKQD) is G4. A G5 region spans residues 174–176 (SAL).

It belongs to the TRAFAC class translation factor GTPase superfamily. Classic translation factor GTPase family. EF-Tu/EF-1A subfamily. As to quaternary structure, monomer.

The protein resides in the cytoplasm. The enzyme catalyses GTP + H2O = GDP + phosphate + H(+). Functionally, GTP hydrolase that promotes the GTP-dependent binding of aminoacyl-tRNA to the A-site of ribosomes during protein biosynthesis. This is Elongation factor Tu from Rippkaea orientalis (strain PCC 8801 / RF-1) (Cyanothece sp. (strain PCC 8801)).